The sequence spans 96 residues: Large ribosomal subunit protein uL23 (96 aa).

It belongs to the universal ribosomal protein uL23 family. Part of the 50S ribosomal subunit. Contacts protein L29, and trigger factor when it is bound to the ribosome.

One of the early assembly proteins it binds 23S rRNA. One of the proteins that surrounds the polypeptide exit tunnel on the outside of the ribosome. Forms the main docking site for trigger factor binding to the ribosome. The protein is Large ribosomal subunit protein uL23 of Bacillus mycoides (strain KBAB4) (Bacillus weihenstephanensis).